The primary structure comprises 79 residues: Large ribosomal subunit protein uL22 (79 aa).

It belongs to the universal ribosomal protein uL22 family. As to quaternary structure, part of the 50S ribosomal subunit.

Its function is as follows. This protein binds specifically to 23S rRNA; its binding is stimulated by other ribosomal proteins, e.g. L4, L17, and L20. It is important during the early stages of 50S assembly. It makes multiple contacts with different domains of the 23S rRNA in the assembled 50S subunit and ribosome. In terms of biological role, the globular domain of the protein is located near the polypeptide exit tunnel on the outside of the subunit, while an extended beta-hairpin is found that lines the wall of the exit tunnel in the center of the 70S ribosome. The polypeptide is Large ribosomal subunit protein uL22 (rplV) (Prunus armeniaca phytoplasma).